Here is a 460-residue protein sequence, read N- to C-terminus: TNF receptor-associated factor family protein DDB_G0290883 (460 aa).

The RING-type; degenerate zinc finger occupies 27–67 (CPICFEFIYKKQIYQCKSGHHACKECWEKSLETKKECMTCK). 2 consecutive TRAF-type zinc fingers follow at residues 141-194 (SHLI…KKEL) and 196-253 (THYK…SELQ). The 129-residue stretch at 320-448 (GYRNKWIISN…DDKLTIEIYI (129 aa)) folds into the MATH domain.

This sequence belongs to the TNF receptor-associated factor family. A subfamily.

It localises to the cytoplasm. Functionally, probable adapter protein and signal transducer that links members of the tumor necrosis factor receptor family to different signaling pathways by association with the receptor cytoplasmic domain and kinases. The chain is TNF receptor-associated factor family protein DDB_G0290883 from Dictyostelium discoideum (Social amoeba).